A 295-amino-acid chain; its full sequence is MGQKINPTGFRLSISRNWSSRWYANNRDFAGMLAEDIKVREYLKKKLKNAAVSRVLIERPAKNARITIFSARPGVVIGKKGEDIEALKKELSRQLGVPVAVNIEEVRKPEIDAKLIADSITQQLEKRIMFRRAMKRAMQNAMRLGALGIKIMSSGRLNGIEIARCEWYREGRVPLHTLRADIDYGTSEAQTTYGIIGVKVWVYKGDTLGRNDGTGAKMIEVADEERKPRGPRRDARPGDRPDRGAPRGAPRAPRGNYAPADGSDKPAEAAGADNNTVKRVRKAAPAAAADGAKTE.

In terms of domain architecture, KH type-2 spans V39–R107. The interval G213–E295 is disordered. The span at E224–A245 shows a compositional bias: basic and acidic residues. 2 stretches are compositionally biased toward low complexity: residues P246–G255 and A283–E295.

It belongs to the universal ribosomal protein uS3 family. In terms of assembly, part of the 30S ribosomal subunit. Forms a tight complex with proteins S10 and S14.

Functionally, binds the lower part of the 30S subunit head. Binds mRNA in the 70S ribosome, positioning it for translation. The protein is Small ribosomal subunit protein uS3 of Polaromonas naphthalenivorans (strain CJ2).